The sequence spans 274 residues: 2-amino-4,5-dihydroxy-6-oxo-7-(phosphonooxy)heptanoate synthase (274 aa).

This sequence belongs to the DeoC/FbaB aldolase family. GriI subfamily. Homodecamer.

It carries out the reaction 2-amino-4,5-dihydroxy-6-oxo-7-(phosphooxy)heptanoate = L-aspartate 4-semialdehyde + dihydroxyacetone phosphate. In terms of biological role, catalyzes aldol condensation between L-aspartate-4-semialdehyde (ASA) and dihydroxyacetone phosphate (DHAP), to form 2-amino-4,5-dihydroxy-6-oxo-7-(phosphonooxy)heptanoate. This chain is 2-amino-4,5-dihydroxy-6-oxo-7-(phosphonooxy)heptanoate synthase (griI), found in Streptomyces griseus subsp. griseus (strain JCM 4626 / CBS 651.72 / NBRC 13350 / KCC S-0626 / ISP 5235).